The following is a 375-amino-acid chain: Alcohol dehydrogenase 1 (375 aa).

Serine 2 bears the N-acetylserine mark. Residues cysteine 47, histidine 68, cysteine 98, cysteine 101, cysteine 104, cysteine 112, and cysteine 175 each contribute to the Zn(2+) site. NAD(+)-binding positions include 200–205 (GLGGVG), aspartate 224, and lysine 229. Residue lysine 234 is modified to N6-succinyllysine. 293-295 (VGV) serves as a coordination point for NAD(+). Lysine 340 carries the N6-succinyllysine modification. Arginine 370 lines the NAD(+) pocket.

It belongs to the zinc-containing alcohol dehydrogenase family. Homodimer. Zn(2+) is required as a cofactor.

It localises to the cytoplasm. The enzyme catalyses a primary alcohol + NAD(+) = an aldehyde + NADH + H(+). It catalyses the reaction a secondary alcohol + NAD(+) = a ketone + NADH + H(+). This chain is Alcohol dehydrogenase 1 (ADH1), found in Oryctolagus cuniculus (Rabbit).